Consider the following 500-residue polypeptide: Glycerol kinase (500 aa).

Thr13 is an ADP binding site. 3 residues coordinate ATP: Thr13, Thr14, and Ser15. Sn-glycerol 3-phosphate is bound at residue Thr13. Arg17 is a binding site for ADP. Residues Arg83, Glu84, Tyr135, and Asp244 each coordinate sn-glycerol 3-phosphate. Glycerol contacts are provided by Arg83, Glu84, Tyr135, Asp244, and Gln245. ADP-binding residues include Thr266 and Gly309. ATP is bound by residues Thr266, Gly309, Gln313, and Gly410. ADP is bound by residues Gly410 and Asn414.

This sequence belongs to the FGGY kinase family.

It catalyses the reaction glycerol + ATP = sn-glycerol 3-phosphate + ADP + H(+). It functions in the pathway polyol metabolism; glycerol degradation via glycerol kinase pathway; sn-glycerol 3-phosphate from glycerol: step 1/1. Its activity is regulated as follows. Inhibited by fructose 1,6-bisphosphate (FBP). Key enzyme in the regulation of glycerol uptake and metabolism. Catalyzes the phosphorylation of glycerol to yield sn-glycerol 3-phosphate. The polypeptide is Glycerol kinase (Burkholderia vietnamiensis (strain G4 / LMG 22486) (Burkholderia cepacia (strain R1808))).